A 130-amino-acid chain; its full sequence is Small ribosomal subunit protein uS9 (130 aa).

A disordered region spans residues 108-130; the sequence is SREKERKKYGQRGARARFQYSKR.

Belongs to the universal ribosomal protein uS9 family.

This chain is Small ribosomal subunit protein uS9, found in Solidesulfovibrio magneticus (strain ATCC 700980 / DSM 13731 / RS-1) (Desulfovibrio magneticus).